Reading from the N-terminus, the 224-residue chain is MDKLLLWMFVFTSLLSEAFCQTDLKRKVFVFPRESETDHVKLIPHLEKPLQNFTLCFRTYSDLSRSQSLFSYSVKGRDNELLIYKEKVGEYSLYIGQSKVTVRGMEEYLSPVHLCTTWESSSGIVEFWVNGKPWVKKSLQREYTVKAPPSIVLGQEQDNYGGGFQRSQSFVGEFSDLYMWDYVLTPQDILFVYRDSPVNPNILNWQALNYEINGYVVIRPRVWD.

An N-terminal signal peptide occupies residues 1–20 (MDKLLLWMFVFTSLLSEAFC). Residues 25-224 (KRKVFVFPRE…YVVIRPRVWD (200 aa)) form the Pentraxin (PTX) domain. A glycan (N-linked (GlcNAc...) asparagine) is linked at N52. A disulfide bond links C56 and C115. The Ca(2+) site is built by D78, N79, E156, Q157, D158, and Q168.

The protein belongs to the pentraxin family. Homopentamer. Pentraxin (or pentaxin) have a discoid arrangement of 5 non-covalently bound subunits. The cofactor is Ca(2+).

The protein localises to the secreted. In Mus musculus (Mouse), this protein is Serum amyloid P-component (Apcs).